The primary structure comprises 30 residues: GIPCGESCVFIPCISSVVGCSCKSKVCYLD.

Positions 1–30 (GIPCGESCVFIPCISSVVGCSCKSKVCYLD) form a cross-link, cyclopeptide (Gly-Asp). Cystine bridges form between Cys4–Cys20, Cys8–Cys22, and Cys13–Cys27.

In terms of processing, contains 3 disulfide bonds. Post-translationally, this is a cyclic peptide.

Its function is as follows. Probably participates in a plant defense mechanism. The protein is Cyclotide cter-F of Clitoria ternatea (Butterfly pea).